Reading from the N-terminus, the 322-residue chain is Transcription initiation factor IIB (322 aa).

A run of 2 repeats spans residues 125–213 (SLIN…VRDL) and 224–305 (NFVY…EIAQ).

Belongs to the TFIIB family.

In terms of biological role, stabilizes TBP binding to an archaeal box-A promoter. Also responsible for recruiting RNA polymerase II to the pre-initiation complex (DNA-TBP-TFIIB). This chain is Transcription initiation factor IIB, found in Aeropyrum pernix (strain ATCC 700893 / DSM 11879 / JCM 9820 / NBRC 100138 / K1).